A 231-amino-acid chain; its full sequence is High-affinity zinc uptake system ATP-binding protein ZnuC (231 aa).

Residues V4–L230 enclose the ABC transporter domain.

The protein belongs to the ABC transporter superfamily. As to quaternary structure, the complex is composed of two ATP-binding proteins (ZnuC), two transmembrane proteins (ZnuB) and a solute-binding protein (ZnuA).

The protein resides in the cell membrane. The enzyme catalyses Zn(2+)(out) + ATP(in) + H2O(in) = Zn(2+)(in) + ADP(in) + phosphate(in) + H(+)(in). In terms of biological role, part of the high-affinity ABC transporter complex ZnuABC involved in zinc import. Responsible for energy coupling to the transport system. ZnuABC-mediated zinc transport is required for comF expression and competence development. This is High-affinity zinc uptake system ATP-binding protein ZnuC (znuC) from Bacillus subtilis (strain 168).